The following is a 545-amino-acid chain: Membrane protein insertase YidC (545 aa).

The next 4 membrane-spanning stretches (helical) occupy residues 350 to 370 (IIGN…AVLY), 424 to 444 (LPML…FASV), 461 to 481 (ADPY…QTYL), and 498 to 518 (PLVF…YWVV).

It belongs to the OXA1/ALB3/YidC family. Type 1 subfamily. In terms of assembly, interacts with the Sec translocase complex via SecD. Specifically interacts with transmembrane segments of nascent integral membrane proteins during membrane integration.

Its subcellular location is the cell inner membrane. Its function is as follows. Required for the insertion and/or proper folding and/or complex formation of integral membrane proteins into the membrane. Involved in integration of membrane proteins that insert both dependently and independently of the Sec translocase complex, as well as at least some lipoproteins. Aids folding of multispanning membrane proteins. In Neisseria gonorrhoeae (strain ATCC 700825 / FA 1090), this protein is Membrane protein insertase YidC.